Here is a 481-residue protein sequence, read N- to C-terminus: uncharacterized protein (481 aa).

The span at 1 to 18 (MSRLPSKTKYHSSHRSLN) shows a compositional bias: basic residues. Positions 1–37 (MSRLPSKTKYHSSHRSLNRKTPLLQRSSETNSLRESG) are disordered. Positions 24-34 (LQRSSETNSLR) are enriched in polar residues. 2 helical membrane-spanning segments follow: residues 172–191 (SIST…AGAI) and 195–214 (AAAG…YLCW).

It localises to the membrane. This is an uncharacterized protein from Coxiella burnetii (strain RSA 493 / Nine Mile phase I).